A 548-amino-acid chain; its full sequence is Chaperonin GroEL (548 aa).

ATP is bound by residues 30–33, Lys-51, 87–91, Gly-415, 479–481, and Asp-495; these read TLGP, DGTTT, and NAA.

The protein belongs to the chaperonin (HSP60) family. Forms a cylinder of 14 subunits composed of two heptameric rings stacked back-to-back. Interacts with the co-chaperonin GroES.

The protein resides in the cytoplasm. The catalysed reaction is ATP + H2O + a folded polypeptide = ADP + phosphate + an unfolded polypeptide.. Functionally, together with its co-chaperonin GroES, plays an essential role in assisting protein folding. The GroEL-GroES system forms a nano-cage that allows encapsulation of the non-native substrate proteins and provides a physical environment optimized to promote and accelerate protein folding. This is Chaperonin GroEL from Pseudomonas fluorescens (strain SBW25).